Here is a 375-residue protein sequence, read N- to C-terminus: Alpha-1,2-galactosyltransferase (375 aa).

The Cytoplasmic segment spans residues 1 to 2 (MR). The chain crosses the membrane as a helical; Signal-anchor for type II membrane protein span at residues 3–23 (FAPYLISAVVITTIILGGAWW). At 24-375 (TSAMDTKLQT…HIQNLLKPSS (352 aa)) the chain is on the lumenal side.

This sequence belongs to the glycosyltransferase 34 family. Post-translationally, O-glycosylated.

The protein resides in the golgi apparatus membrane. In terms of biological role, involved in the O- and N-linked oligosaccharide modification of proteins transported through the Golgi stack. This occurs in cis Golgi where the enzyme transfers galactose from UDP-galactose to a variety of mannose based acceptors. The chain is Alpha-1,2-galactosyltransferase (gma12) from Schizosaccharomyces pombe (strain 972 / ATCC 24843) (Fission yeast).